The sequence spans 389 residues: Protein OSCP1 (389 aa).

Expressed predominantly in testis, also found in placenta and to a lesser extent in thymus and small intestine; abundantly expressed in tumor-derived cell lines. Ubiquitously expressed.

The protein localises to the basal cell membrane. In terms of biological role, may be involved in drug clearance in the placenta. This Homo sapiens (Human) protein is Protein OSCP1 (OSCP1).